A 192-amino-acid polypeptide reads, in one-letter code: CASP-like protein 4C1 (192 aa).

Positions Met1–Glu11 are enriched in polar residues. A disordered region spans residues Met1 to Pro23. The Cytoplasmic portion of the chain corresponds to Met1–Asn40. A compositionally biased stretch (pro residues) spans Ser14–Pro23. Residues Leu41–Met61 traverse the membrane as a helical segment. At Leu62–Tyr75 the chain is on the extracellular side. Residues Val76–Trp96 form a helical membrane-spanning segment. Residues Glu97–Glu107 are Cytoplasmic-facing. The helical transmembrane segment at Ile108–Ala128 threads the bilayer. The Extracellular portion of the chain corresponds to Asp129 to Tyr156. A helical transmembrane segment spans residues Ile157–Gly177. At Phe178 to Val192 the chain is on the cytoplasmic side.

The protein belongs to the Casparian strip membrane proteins (CASP) family. As to quaternary structure, homodimer and heterodimers.

The protein localises to the cell membrane. This chain is CASP-like protein 4C1, found in Ricinus communis (Castor bean).